The primary structure comprises 87 residues: Putative protein KleG (87 aa).

2 disordered regions span residues 1 to 23 and 61 to 87; these read MRHS…WPSS and IPTT…IFSR. Positions 68–78 are enriched in basic residues; the sequence is RGRRPQRHRPS.

The protein is Putative protein KleG (kleG) of Escherichia coli.